The following is a 217-amino-acid chain: Large ribosomal subunit protein uL3 (217 aa).

A disordered region spans residues 129-161; sequence SRGPMSHGSKNHRAPGSTGAGTTPGRIYPGKRM. Residues 142-153 show a composition bias toward low complexity; it reads APGSTGAGTTPG.

It belongs to the universal ribosomal protein uL3 family. Part of the 50S ribosomal subunit. Forms a cluster with proteins L14 and L19.

Functionally, one of the primary rRNA binding proteins, it binds directly near the 3'-end of the 23S rRNA, where it nucleates assembly of the 50S subunit. This Prochlorococcus marinus subsp. pastoris (strain CCMP1986 / NIES-2087 / MED4) protein is Large ribosomal subunit protein uL3.